Reading from the N-terminus, the 845-residue chain is Beta-mannosidase B (845 aa).

N-linked (GlcNAc...) asparagine glycosylation is present at Asn-252. Glu-432 acts as the Proton donor in catalysis. Residues Asn-717 and Asn-723 are each glycosylated (N-linked (GlcNAc...) asparagine).

This sequence belongs to the glycosyl hydrolase 2 family. Beta-mannosidase B subfamily.

The catalysed reaction is Hydrolysis of terminal, non-reducing beta-D-mannose residues in beta-D-mannosides.. Its pathway is glycan metabolism; N-glycan degradation. Exoglycosidase that cleaves the single beta-linked mannose residue from the non-reducing end of beta-mannosidic oligosaccharides of various complexity and length. Prefers mannobiose over mannotriose and has no activity against polymeric mannan. Is also severely restricted by galactosyl substitutions at the +1 subsite. This Aspergillus fumigatus (strain CBS 144.89 / FGSC A1163 / CEA10) (Neosartorya fumigata) protein is Beta-mannosidase B (mndB).